The chain runs to 502 residues: ATP synthase subunit alpha (502 aa).

ATP is bound at residue 169–176 (GDRQTGKT).

The protein belongs to the ATPase alpha/beta chains family. In terms of assembly, F-type ATPases have 2 components, CF(1) - the catalytic core - and CF(0) - the membrane proton channel. CF(1) has five subunits: alpha(3), beta(3), gamma(1), delta(1), epsilon(1). CF(0) has three main subunits: a(1), b(2) and c(9-12). The alpha and beta chains form an alternating ring which encloses part of the gamma chain. CF(1) is attached to CF(0) by a central stalk formed by the gamma and epsilon chains, while a peripheral stalk is formed by the delta and b chains. The F(1)F(0) complex interacts with SpoIIIJ and YqjG; YqgA is found in the same complex.

It localises to the cell membrane. The protein localises to the membrane raft. It catalyses the reaction ATP + H2O + 4 H(+)(in) = ADP + phosphate + 5 H(+)(out). Functionally, produces ATP from ADP in the presence of a proton gradient across the membrane. The alpha chain is a regulatory subunit. The protein is ATP synthase subunit alpha of Bacillus subtilis (strain 168).